Here is a 276-residue protein sequence, read N- to C-terminus: Glutamate racemase (276 aa).

Substrate is bound by residues 10 to 11 (DS) and 42 to 43 (YG). C74 serves as the catalytic Proton donor/acceptor. 75–76 (NT) is a substrate binding site. Catalysis depends on C185, which acts as the Proton donor/acceptor. 186-187 (TH) lines the substrate pocket.

This sequence belongs to the aspartate/glutamate racemases family.

The enzyme catalyses L-glutamate = D-glutamate. Its pathway is cell wall biogenesis; peptidoglycan biosynthesis. In terms of biological role, provides the (R)-glutamate required for cell wall biosynthesis. This Levilactobacillus brevis (Lactobacillus brevis) protein is Glutamate racemase.